Reading from the N-terminus, the 129-residue chain is D-ribose pyranase (129 aa).

Residue His20 is the Proton donor of the active site. Substrate is bound by residues Asp28, His96, and 118–120; that span reads YAN.

Belongs to the RbsD / FucU family. RbsD subfamily. In terms of assembly, homodecamer.

Its subcellular location is the cytoplasm. It catalyses the reaction beta-D-ribopyranose = beta-D-ribofuranose. Its pathway is carbohydrate metabolism; D-ribose degradation; D-ribose 5-phosphate from beta-D-ribopyranose: step 1/2. Functionally, catalyzes the interconversion of beta-pyran and beta-furan forms of D-ribose. This is D-ribose pyranase from Halalkalibacterium halodurans (strain ATCC BAA-125 / DSM 18197 / FERM 7344 / JCM 9153 / C-125) (Bacillus halodurans).